Consider the following 123-residue polypeptide: Secreted RxLR effector protein RXLR-C21 (123 aa).

Residues 1-23 (MRLHLLVLSVIVVSLLVSDNAHA) form the signal peptide. Positions 32 to 65 (RALRETPINGLVTNQLAVSRNLTPAKFITNSEER) match the RxLR-dEER motif. A helical transmembrane segment spans residues 101–121 (VTTICSIVLFVMVFGCLYKIF).

This sequence belongs to the RxLR effector family.

The protein resides in the secreted. Its subcellular location is the host endoplasmic reticulum membrane. Its function is as follows. Secreted effector that does not suppress pattern-triggered immunity (PTI) in plant host. The chain is Secreted RxLR effector protein RXLR-C21 from Plasmopara halstedii (Downy mildew of sunflower).